The primary structure comprises 160 residues: Nucleotide-binding protein Tgr7_1196 (160 aa).

This sequence belongs to the YajQ family.

In terms of biological role, nucleotide-binding protein. In Thioalkalivibrio sulfidiphilus (strain HL-EbGR7), this protein is Nucleotide-binding protein Tgr7_1196.